A 203-amino-acid polypeptide reads, in one-letter code: Cell division protein SepF (203 aa).

2 disordered regions span residues 26-51 (DGEL…RRGQ) and 167-203 (GTAS…WRNQ). Composition is skewed to basic and acidic residues over residues 39–50 (EPPRRSAPERRG) and 183–203 (RRSE…WRNQ).

Belongs to the SepF family. Homodimer. Interacts with FtsZ.

The protein resides in the cytoplasm. Cell division protein that is part of the divisome complex and is recruited early to the Z-ring. Probably stimulates Z-ring formation, perhaps through the cross-linking of FtsZ protofilaments. Its function overlaps with FtsA. This is Cell division protein SepF from Symbiobacterium thermophilum (strain DSM 24528 / JCM 14929 / IAM 14863 / T).